Consider the following 70-residue polypeptide: DNA gyrase inhibitor YacG (70 aa).

Residues cysteine 20, cysteine 23, cysteine 35, and cysteine 39 each contribute to the Zn(2+) site.

This sequence belongs to the DNA gyrase inhibitor YacG family. As to quaternary structure, interacts with GyrB. Requires Zn(2+) as cofactor.

Its function is as follows. Inhibits all the catalytic activities of DNA gyrase by preventing its interaction with DNA. Acts by binding directly to the C-terminal domain of GyrB, which probably disrupts DNA binding by the gyrase. In Rhizobium etli (strain CIAT 652), this protein is DNA gyrase inhibitor YacG.